A 131-amino-acid chain; its full sequence is MYNKVIMIGRLTAKPEMVKTPTDKSVTRATVAVNRRFKGSNGEREADFINVVMWGRLAETLASYGTKGSLISIDGELRTRKYEKDGQTHYITEVLASSFQLLESRAQRAMRENNVSGDLSDLVLEEEELPF.

Positions Met1–Glu103 constitute an SSB domain. An Important for interaction with partner proteins motif is present at residues Glu126 to Phe131.

Homotetramer.

Plays an important role in DNA replication, recombination and repair. Binds to ssDNA and to an array of partner proteins to recruit them to their sites of action during DNA metabolism. This is Single-stranded DNA-binding protein 2 (ssb2) from Streptococcus agalactiae serotype V (strain ATCC BAA-611 / 2603 V/R).